Reading from the N-terminus, the 383-residue chain is Putative type I specificity subunit S.MgeORF438P (383 aa).

Positions 1 to 142 (MTPKLKLNNN…KELEIPFTSN (142 aa)) are TRD1. A conserved region 1 region spans residues 143 to 182 (KNEQHAIANTLSVFDERLENLASLIEINRKLRDEYAHKLF). Residues 143–182 (KNEQHAIANTLSVFDERLENLASLIEINRKLRDEYAHKLF) adopt a coiled-coil conformation. Residues 183-330 (SLDEAFLSHW…GEIKVPYVKS (148 aa)) form a TRD2 region. Positions 331 to 370 (FQLQRKAGKIVFLLDQKLDQYKKELSSLTVIRDTLLKKLF) are conserved region 2. Residues 331–370 (FQLQRKAGKIVFLLDQKLDQYKKELSSLTVIRDTLLKKLF) are a coiled coil.

This sequence belongs to the type-I restriction system S methylase family.

Functionally, the specificity (S) subunit of a type I restriction enzyme; this subunit dictates DNA sequence specificity. This bacterium does not encode the associated endonuclease or methylase subunits. The protein is Putative type I specificity subunit S.MgeORF438P of Mycoplasma genitalium (strain ATCC 33530 / DSM 19775 / NCTC 10195 / G37) (Mycoplasmoides genitalium).